The following is a 415-amino-acid chain: Secernin-2 (415 aa).

The active site involves cysteine 8.

It belongs to the peptidase C69 family. Secernin subfamily.

The sequence is that of Secernin-2 (scrn2) from Danio rerio (Zebrafish).